Reading from the N-terminus, the 477-residue chain is Zinc metalloproteinase/disintegrin (477 aa).

An N-terminal signal peptide occupies residues 1-19 (MIQVLLVIICLAVPYQGSS). Residues 20 to 186 (IILESGNVND…PIKKASQSNL (167 aa)) constitute a propeptide that is removed on maturation. In terms of domain architecture, Peptidase M12B spans 192-388 (RYIELVIVAD…QKPQCILNKP (197 aa)). Ca(2+)-binding residues include glutamate 195 and aspartate 279. 3 disulfides stabilise this stretch: cysteine 303–cysteine 383, cysteine 343–cysteine 367, and cysteine 345–cysteine 350. Residue histidine 328 participates in Zn(2+) binding. Glutamate 329 is a catalytic residue. Residues histidine 332 and histidine 338 each coordinate Zn(2+). Positions 383 and 386 each coordinate Ca(2+). A propeptide spanning residues 389 to 404 (LRTDTVSTPVSGNELL) is cleaved from the precursor. The region spanning 396–477 (TPVSGNELLE…AGCPRNPFHA (82 aa)) is the Disintegrin domain. Cystine bridges form between cysteine 410/cysteine 425, cysteine 412/cysteine 420, cysteine 419/cysteine 442, cysteine 433/cysteine 439, cysteine 438/cysteine 463, and cysteine 451/cysteine 470. Residues 455–457 (RGD) carry the Cell attachment site motif.

This sequence belongs to the venom metalloproteinase (M12B) family. P-II subfamily. P-IIa sub-subfamily. In terms of assembly, monomer. Requires Zn(2+) as cofactor. In terms of tissue distribution, expressed by the venom gland.

The protein resides in the secreted. Its function is as follows. Impairs hemostasis in the envenomed animal. In terms of biological role, inhibits platelet aggregation induced by ADP, thrombin, platelet-activating factor and collagen. Acts by inhibiting fibrinogen interaction with platelet receptors GPIIb/GPIIIa (ITGA2B/ITGB3). The protein is Zinc metalloproteinase/disintegrin of Gloydius halys (Chinese water mocassin).